The chain runs to 257 residues: Type III pantothenate kinase (257 aa).

6–13 (DVGNTSTK) contacts ATP. A substrate-binding site is contributed by 109-112 (GADR). Asp-111 functions as the Proton acceptor in the catalytic mechanism. Asp-132 is a binding site for K(+). Residue Thr-135 participates in ATP binding. Thr-187 provides a ligand contact to substrate.

Belongs to the type III pantothenate kinase family. Homodimer. NH4(+) is required as a cofactor. K(+) serves as cofactor.

It localises to the cytoplasm. The enzyme catalyses (R)-pantothenate + ATP = (R)-4'-phosphopantothenate + ADP + H(+). It functions in the pathway cofactor biosynthesis; coenzyme A biosynthesis; CoA from (R)-pantothenate: step 1/5. Functionally, catalyzes the phosphorylation of pantothenate (Pan), the first step in CoA biosynthesis. The protein is Type III pantothenate kinase of Anaplasma marginale (strain St. Maries).